Consider the following 329-residue polypeptide: MVEIYYDDDASLDVLADRKVAVIGYGSQGHAHALNLRDSGVDVRVGLPADSRSRARAEEEGLRVLTPAEASAEADIIMLLTPDTTHRTIYAESIAPHLTAGKALAFGHGFNIRYGLIEPPAGVDVFMVAPKGPGHLVRRVFEEGKGVPVLVAVEADASGNALAVALAYAKGIGGTRAGALRTTFTEETETDLFGEQAVLCGGASALVQAGFETLVEAGYTPEVAYFECLHELKLIVDLMYEGGISQMRYSISDTAEYGDVTRGPRVITPAVKAEMRKILDEIRDGAFAREWVAEDDNGRPNFTKLVAEGKQHPIEQVGAKLRPMMSWIA.

One can recognise a KARI N-terminal Rossmann domain in the interval valine 2 to threonine 182. NADP(+) contacts are provided by residues tyrosine 25–glutamine 28, serine 51, and serine 53. The active site involves histidine 108. Residue glycine 134 coordinates NADP(+). Residues threonine 183–isoleucine 328 form the KARI C-terminal knotted domain. Mg(2+)-binding residues include aspartate 191, glutamate 195, glutamate 227, and glutamate 231. Serine 252 is a binding site for substrate.

It belongs to the ketol-acid reductoisomerase family. Mg(2+) is required as a cofactor.

The enzyme catalyses (2R)-2,3-dihydroxy-3-methylbutanoate + NADP(+) = (2S)-2-acetolactate + NADPH + H(+). It catalyses the reaction (2R,3R)-2,3-dihydroxy-3-methylpentanoate + NADP(+) = (S)-2-ethyl-2-hydroxy-3-oxobutanoate + NADPH + H(+). Its pathway is amino-acid biosynthesis; L-isoleucine biosynthesis; L-isoleucine from 2-oxobutanoate: step 2/4. It participates in amino-acid biosynthesis; L-valine biosynthesis; L-valine from pyruvate: step 2/4. Functionally, involved in the biosynthesis of branched-chain amino acids (BCAA). Catalyzes an alkyl-migration followed by a ketol-acid reduction of (S)-2-acetolactate (S2AL) to yield (R)-2,3-dihydroxy-isovalerate. In the isomerase reaction, S2AL is rearranged via a Mg-dependent methyl migration to produce 3-hydroxy-3-methyl-2-ketobutyrate (HMKB). In the reductase reaction, this 2-ketoacid undergoes a metal-dependent reduction by NADPH to yield (R)-2,3-dihydroxy-isovalerate. This chain is Ketol-acid reductoisomerase (NADP(+)), found in Frankia casuarinae (strain DSM 45818 / CECT 9043 / HFP020203 / CcI3).